The primary structure comprises 798 residues: Nuclear intron maturase 4, mitochondrial (798 aa).

Residues 1–16 (MFRKRNLVLDLLRRCY) constitute a mitochondrion transit peptide. The interval 578 to 665 (VVAPTNAIGR…AAKYRIHENE (88 aa)) is intron maturase type-2. The THAP-type zinc finger occupies 729–778 (CFVIGCSMAAPAVYTLHAMERQKFPGWKTGFSVCIPSSLNGRRIGLCKQH).

The protein belongs to the plant nuclear intron maturase (nMat) family.

The protein resides in the mitochondrion. It localises to the plastid. Its subcellular location is the chloroplast. Functionally, nuclear-encoded maturase required for splicing of group-II introns in mitochondria. Involved in NAD1 pre-mRNA processing and maturation of introns 1, 3 and 4. Necessary for mitochondrial biogenesis during early developmental stages. Essential for respiratory holocomplex I biogenesis in mitochondria. In Arabidopsis thaliana (Mouse-ear cress), this protein is Nuclear intron maturase 4, mitochondrial.